The sequence spans 44 residues: Photosystem I reaction center subunit IX (44 aa).

The helical transmembrane segment at 7–27 (YLSTAPVLATLWFGSLAGLLI) threads the bilayer.

The protein belongs to the PsaJ family.

Its subcellular location is the plastid. It is found in the chloroplast thylakoid membrane. Its function is as follows. May help in the organization of the PsaE and PsaF subunits. The sequence is that of Photosystem I reaction center subunit IX from Cycas taitungensis (Prince sago).